A 466-amino-acid chain; its full sequence is Asparagine--tRNA ligase (466 aa).

It belongs to the class-II aminoacyl-tRNA synthetase family. In terms of assembly, homodimer.

Its subcellular location is the cytoplasm. The enzyme catalyses tRNA(Asn) + L-asparagine + ATP = L-asparaginyl-tRNA(Asn) + AMP + diphosphate + H(+). This is Asparagine--tRNA ligase from Shewanella sp. (strain ANA-3).